A 132-amino-acid chain; its full sequence is Ribosome-binding factor A (132 aa).

The protein belongs to the RbfA family. In terms of assembly, monomer. Binds 30S ribosomal subunits, but not 50S ribosomal subunits or 70S ribosomes.

It is found in the cytoplasm. Functionally, one of several proteins that assist in the late maturation steps of the functional core of the 30S ribosomal subunit. Associates with free 30S ribosomal subunits (but not with 30S subunits that are part of 70S ribosomes or polysomes). Required for efficient processing of 16S rRNA. May interact with the 5'-terminal helix region of 16S rRNA. This is Ribosome-binding factor A from Pseudomonas putida (strain W619).